We begin with the raw amino-acid sequence, 116 residues long: Ribonuclease P protein component (116 aa).

The protein belongs to the RnpA family. In terms of assembly, consists of a catalytic RNA component (M1 or rnpB) and a protein subunit.

It catalyses the reaction Endonucleolytic cleavage of RNA, removing 5'-extranucleotides from tRNA precursor.. RNaseP catalyzes the removal of the 5'-leader sequence from pre-tRNA to produce the mature 5'-terminus. It can also cleave other RNA substrates such as 4.5S RNA. The protein component plays an auxiliary but essential role in vivo by binding to the 5'-leader sequence and broadening the substrate specificity of the ribozyme. This chain is Ribonuclease P protein component, found in Exiguobacterium sibiricum (strain DSM 17290 / CCUG 55495 / CIP 109462 / JCM 13490 / 255-15).